Reading from the N-terminus, the 202-residue chain is Small ribosomal subunit protein uS4 (202 aa).

Residues 91–157 enclose the S4 RNA-binding domain; that stretch reads CRLDNVVYRA…TPFIVARETH (67 aa).

It belongs to the universal ribosomal protein uS4 family. As to quaternary structure, part of the 30S ribosomal subunit. Contacts protein S5. The interaction surface between S4 and S5 is involved in control of translational fidelity.

One of the primary rRNA binding proteins, it binds directly to 16S rRNA where it nucleates assembly of the body of the 30S subunit. In terms of biological role, with S5 and S12 plays an important role in translational accuracy. This chain is Small ribosomal subunit protein uS4, found in Nocardioides sp. (strain ATCC BAA-499 / JS614).